The sequence spans 668 residues: Threonine--tRNA ligase (668 aa).

Positions 1–64 (MSQAISLTFP…TDGKIEIITR (64 aa)) constitute a TGS domain. The interval 245-553 (DHRKLGREMD…LIENFAGHMP (309 aa)) is catalytic. Zn(2+)-binding residues include Cys347, His398, and His530.

Belongs to the class-II aminoacyl-tRNA synthetase family. In terms of assembly, homodimer. Requires Zn(2+) as cofactor.

The protein resides in the cytoplasm. It catalyses the reaction tRNA(Thr) + L-threonine + ATP = L-threonyl-tRNA(Thr) + AMP + diphosphate + H(+). In terms of biological role, catalyzes the attachment of threonine to tRNA(Thr) in a two-step reaction: L-threonine is first activated by ATP to form Thr-AMP and then transferred to the acceptor end of tRNA(Thr). Also edits incorrectly charged L-seryl-tRNA(Thr). This is Threonine--tRNA ligase from Rhizobium etli (strain CIAT 652).